The chain runs to 89 residues: Small ribosomal subunit protein uS14 (89 aa).

It belongs to the universal ribosomal protein uS14 family. As to quaternary structure, part of the 30S ribosomal subunit. Contacts proteins S3 and S10.

Binds 16S rRNA, required for the assembly of 30S particles and may also be responsible for determining the conformation of the 16S rRNA at the A site. This is Small ribosomal subunit protein uS14 from Flavobacterium psychrophilum (strain ATCC 49511 / DSM 21280 / CIP 103535 / JIP02/86).